Reading from the N-terminus, the 333-residue chain is Na(+)/H(+) exchange regulatory cofactor NHE-RF1 (333 aa).

Residues leucine 13–glutamine 93 form the PDZ 1 domain. Disordered stretches follow at residues valine 90–aspartate 164 and leucine 232–leucine 333. The segment covering glutamine 97 to arginine 111 has biased composition (basic and acidic residues). The segment covering glutamate 112 to glutamate 122 has biased composition (low complexity). Residues serine 124–proline 133 are compositionally biased toward basic and acidic residues. The PDZ 2 domain maps to leucine 135 to leucine 215. 2 stretches are compositionally biased toward basic and acidic residues: residues serine 274–serine 289 and tryptophan 323–leucine 333.

The protein resides in the endomembrane system. The protein localises to the cell projection. It localises to the filopodium. Its subcellular location is the ruffle. It is found in the microvillus. In terms of biological role, scaffold protein that connects plasma membrane proteins with members of the ezrin/moesin/radixin family and thereby helps to link them to the actin cytoskeleton and to regulate their surface expression. Was first known to play a role in the regulation of the activity and subcellular location of SLC9A3. May enhance Wnt signaling. The polypeptide is Na(+)/H(+) exchange regulatory cofactor NHE-RF1 (NHERF1) (Gallus gallus (Chicken)).